The following is a 467-amino-acid chain: Chromosomal replication initiator protein DnaA (467 aa).

The domain I, interacts with DnaA modulators stretch occupies residues 1–87 (MSSSLWLQCL…VGSRPVVAPK (87 aa)). The interval 87 to 130 (KPAPVRTAADVAAESSAPAQLAQRKPIHKTWDDDSAAADITHRS) is domain II. Residues 131 to 347 (NVNPKHKFNN…GALNRVIANA (217 aa)) form a domain III, AAA+ region region. Residues Gly175, Gly177, Lys178, and Thr179 each contribute to the ATP site. Positions 348 to 467 (NFTGRPITID…YSNLIRTLSS (120 aa)) are domain IV, binds dsDNA.

It belongs to the DnaA family. In terms of assembly, oligomerizes as a right-handed, spiral filament on DNA at oriC.

It localises to the cytoplasm. Its function is as follows. Plays an essential role in the initiation and regulation of chromosomal replication. ATP-DnaA binds to the origin of replication (oriC) to initiate formation of the DNA replication initiation complex once per cell cycle. Binds the DnaA box (a 9 base pair repeat at the origin) and separates the double-stranded (ds)DNA. Forms a right-handed helical filament on oriC DNA; dsDNA binds to the exterior of the filament while single-stranded (ss)DNA is stabiized in the filament's interior. The ATP-DnaA-oriC complex binds and stabilizes one strand of the AT-rich DNA unwinding element (DUE), permitting loading of DNA polymerase. After initiation quickly degrades to an ADP-DnaA complex that is not apt for DNA replication. Binds acidic phospholipids. This chain is Chromosomal replication initiator protein DnaA, found in Vibrio cholerae serotype O1 (strain ATCC 39315 / El Tor Inaba N16961).